The chain runs to 540 residues: Phenylalanine--tRNA ligase beta subunit (540 aa).

Residues L268–P343 form the B5 domain. The Mg(2+) site is built by D321, D327, E330, and E331.

Belongs to the phenylalanyl-tRNA synthetase beta subunit family. Type 2 subfamily. Tetramer of two alpha and two beta subunits. Mg(2+) is required as a cofactor.

The protein resides in the cytoplasm. The enzyme catalyses tRNA(Phe) + L-phenylalanine + ATP = L-phenylalanyl-tRNA(Phe) + AMP + diphosphate + H(+). This chain is Phenylalanine--tRNA ligase beta subunit, found in Sulfurisphaera tokodaii (strain DSM 16993 / JCM 10545 / NBRC 100140 / 7) (Sulfolobus tokodaii).